The following is a 455-amino-acid chain: MALWGGRFQGETSALFKLFNDSLPVDYRLFEQDVVGSIAWADAIASVGIITATECSDLKKALNDLLVEVNGDPAIILASGAEDIHSFVESALIAKVGDLGKKLHTGRSRNDQVATDLKLWCQSEGAALLARLHSLHAELLALAEREFDAVMPGYTHLQRAQPVTFGHWCLAYVEMYERDISRLADALTRANTCPLGSGALAGTAYKMDRHALAAALNFASPTLNSLDSVSDRDHVVELCSTASISMMHLSRMAEDLIFFNSGEANFISLSDEVTSGSSLMPQKKNPDALELIRGKTGRVYGSLVGILTTMKALPLAYNKDMQEDKEGLFDVVDSWAICLDMAALVLSGLKVNRPNALLAAQQGYANSTELADYLVSKGMPFREAHHVVGEVVVAAIAKQIPLEEFSLAELKTFAAIIEDDVYPNLTIEACLAKRDVLGGTALPQIQQAIAAKKAR.

It belongs to the lyase 1 family. Argininosuccinate lyase subfamily.

The protein localises to the cytoplasm. The enzyme catalyses 2-(N(omega)-L-arginino)succinate = fumarate + L-arginine. It participates in amino-acid biosynthesis; L-arginine biosynthesis; L-arginine from L-ornithine and carbamoyl phosphate: step 3/3. In Shewanella baltica (strain OS195), this protein is Argininosuccinate lyase.